A 264-amino-acid polypeptide reads, in one-letter code: Thymidylate synthase (264 aa).

R21 is a dUMP binding site. H51 contacts (6R)-5,10-methylene-5,6,7,8-tetrahydrofolate. Residue R126–R127 coordinates dUMP. Catalysis depends on C146, which acts as the Nucleophile. DUMP-binding positions include R166 to D169, N177, and H207 to Y209. D169 serves as a coordination point for (6R)-5,10-methylene-5,6,7,8-tetrahydrofolate. Residue A263 coordinates (6R)-5,10-methylene-5,6,7,8-tetrahydrofolate.

Belongs to the thymidylate synthase family. Bacterial-type ThyA subfamily. In terms of assembly, homodimer.

Its subcellular location is the cytoplasm. It carries out the reaction dUMP + (6R)-5,10-methylene-5,6,7,8-tetrahydrofolate = 7,8-dihydrofolate + dTMP. The protein operates within pyrimidine metabolism; dTTP biosynthesis. Catalyzes the reductive methylation of 2'-deoxyuridine-5'-monophosphate (dUMP) to 2'-deoxythymidine-5'-monophosphate (dTMP) while utilizing 5,10-methylenetetrahydrofolate (mTHF) as the methyl donor and reductant in the reaction, yielding dihydrofolate (DHF) as a by-product. This enzymatic reaction provides an intracellular de novo source of dTMP, an essential precursor for DNA biosynthesis. In Bacteroides thetaiotaomicron (strain ATCC 29148 / DSM 2079 / JCM 5827 / CCUG 10774 / NCTC 10582 / VPI-5482 / E50), this protein is Thymidylate synthase.